The chain runs to 247 residues: Pyridoxine 5'-phosphate synthase (247 aa).

N12 contacts 3-amino-2-oxopropyl phosphate. 14–15 (DH) lines the 1-deoxy-D-xylulose 5-phosphate pocket. Position 23 (R23) interacts with 3-amino-2-oxopropyl phosphate. H48 functions as the Proton acceptor in the catalytic mechanism. Residues R50 and H55 each coordinate 1-deoxy-D-xylulose 5-phosphate. Catalysis depends on E75, which acts as the Proton acceptor. T105 serves as a coordination point for 1-deoxy-D-xylulose 5-phosphate. H196 functions as the Proton donor in the catalytic mechanism. Residues G197 and 218–219 (GH) each bind 3-amino-2-oxopropyl phosphate.

It belongs to the PNP synthase family. As to quaternary structure, homooctamer; tetramer of dimers.

The protein resides in the cytoplasm. It catalyses the reaction 3-amino-2-oxopropyl phosphate + 1-deoxy-D-xylulose 5-phosphate = pyridoxine 5'-phosphate + phosphate + 2 H2O + H(+). It participates in cofactor biosynthesis; pyridoxine 5'-phosphate biosynthesis; pyridoxine 5'-phosphate from D-erythrose 4-phosphate: step 5/5. In terms of biological role, catalyzes the complicated ring closure reaction between the two acyclic compounds 1-deoxy-D-xylulose-5-phosphate (DXP) and 3-amino-2-oxopropyl phosphate (1-amino-acetone-3-phosphate or AAP) to form pyridoxine 5'-phosphate (PNP) and inorganic phosphate. The protein is Pyridoxine 5'-phosphate synthase of Pseudomonas fluorescens (strain SBW25).